The primary structure comprises 664 residues: uncharacterized protein (664 aa).

This is an uncharacterized protein from Sinorhizobium fredii (strain NBRC 101917 / NGR234).